Consider the following 455-residue polypeptide: T-box protein VegT-B (455 aa).

The T-box DNA-binding region spans 57 to 230; it reads LWTQFHQEGT…HNPFAKGFRE (174 aa). Positions 229–241 are enriched in basic and acidic residues; sequence REQERSHKRDDVL. Disordered regions lie at residues 229 to 276 and 295 to 350; these read REQE…RIKE and ANQG…RRLT. Over residues 308 to 326 the composition is skewed to polar residues; the sequence is GVNQEQQVPTSSSNFYIKS.

In terms of assembly, forms a repression complex on the promoters of the nodal/nr1 and siamois genes with the maternal factors tcf7l1/tcf3 and pouf5.1/oct-25. Interacts (via C-terminus) with tcf7l1/tcf3 (via N-terminus). Also interacts with the other POU-domain transcription factors pou5f1.2/oct-91 and pou5f1.3/oct-60. Maternally localized to the vegetal hemisphere of oocytes. Zygotic expression parallels blastopore formation and shifts from dorsal expression in the marginal zone of late blastula and early gastrula stages to a ventral/lateral expression at later stages. During neurula and tailbud stages, expressed in the posterior and anterior ends of the embryo. During tailbud stages, expressed in a subset of interneurons in the neural tube.

It localises to the nucleus. Functionally, transcription factor required for both mesoderm and endoderm formation in the embryo; signaling determinants and concentration levels may determine which germ layer is formed. Acts together with beta-catenin to activate genes that are responsible for mesoderm induction including wnt-8, eomes t/bra, siamois, mix1 and sox17. Directly binds to promoter DNA. Patterns the mesoderm along the dorsoventral and posterior axis. Activates siamois gene transcription when alone or in combination with beta-catenin, but inhibits siamois transcription in combination with pou5f1.1/oct-25. In Xenopus laevis (African clawed frog), this protein is T-box protein VegT-B (vegt-b).